The sequence spans 187 residues: UPF0301 protein ESA_00394 (187 aa).

Belongs to the UPF0301 (AlgH) family.

This is UPF0301 protein ESA_00394 from Cronobacter sakazakii (strain ATCC BAA-894) (Enterobacter sakazakii).